The primary structure comprises 436 residues: MEINVDIQPDCTATLKASIPAETTAARRASIVDSYAAKAKLPGFRPGKTPKSIIEKRFKKEMEEELLDTLFETACSTALEENPKLKVLSFGKPEQSLDDQGNYTATSTMTVVPEFELPEYKGIEVKVPSSEVTEADVEEALNSLAEQIAEFTPVDRAAQKDDVAIIDFKTTLDGKPVAEAVGKPVGFLEGRDGQWMKVEDDQFLPGFASALEGLNAGDSKDITVTIPDTFPITELRGKELVFHATVKEVREKQLPAMDDAFAEKVLPGKNLEELKTALKENLAQRKAMQIDEAKADQITEKLADMLDFNLPEAVVEREVYGILQQKMQQAMYSGNAPADMDKFVEEAREEAKQEAKRNLKVFFMLQEVAQVEKIAVTEMELYNEVARQARQQKKNLKSYIRELQREGRVHGIRMSLLTAKVLDFLTKEAKVTVDEQ.

Residues 161 to 255 (DDVAIIDFKT…VKEVREKQLP (95 aa)) form the PPIase FKBP-type domain.

Belongs to the FKBP-type PPIase family. Tig subfamily.

It is found in the cytoplasm. It carries out the reaction [protein]-peptidylproline (omega=180) = [protein]-peptidylproline (omega=0). Involved in protein export. Acts as a chaperone by maintaining the newly synthesized protein in an open conformation. Functions as a peptidyl-prolyl cis-trans isomerase. This Akkermansia muciniphila (strain ATCC BAA-835 / DSM 22959 / JCM 33894 / BCRC 81048 / CCUG 64013 / CIP 107961 / Muc) protein is Trigger factor.